A 1091-amino-acid polypeptide reads, in one-letter code: Ubiquitin carboxyl-terminal hydrolase 36 (1091 aa).

A disordered region spans residues 115-152 (ANGHDNNGRKLSDHPNQNHNHANPNGHHANPNELPKPK). The span at 128 to 146 (HPNQNHNHANPNGHHANPN) shows a compositional bias: low complexity. The 309-residue stretch at 176 to 484 (SGMINAGNTC…NAYIMFYELD (309 aa)) folds into the USP domain. The active-site Nucleophile is C185. The active-site Proton acceptor is the H443. A phosphoserine mark is found at S518 and S522. Disordered regions lie at residues 523–572 (PAKF…KSPL), 594–892 (PTAN…ELLK), 972–1007 (QRDL…GYNP), and 1068–1091 (LAAG…QQQS). Positions 547-572 (TTIQFKPQHQPSHQQNGVQQSAKSPL) are enriched in polar residues. Residues 594–612 (PTANGNKSSSNHSNHKSVN) are compositionally biased toward low complexity. Residues 643–652 (KMDDCMDSGK) are compositionally biased toward basic and acidic residues. The span at 653-667 (PKSPVKTPVKTPLKS) shows a compositional bias: low complexity. Residues T659 and T663 each carry the phosphothreonine modification. Residues S673 and S675 each carry the phosphoserine modification. Residues 691 to 702 (RSSDSSDSEHEP) are compositionally biased toward basic and acidic residues. Polar residues predominate over residues 703–727 (TTSSVQLNGHSKTNGSLSNGSSKST). At S749 the chain carries Phosphoserine. Acidic residues predominate over residues 749–759 (SEDDDDDEDEP). Low complexity predominate over residues 769–780 (PQKQSQSQSRSG). Over residues 781-790 (PPSPKTPPSP) the composition is skewed to pro residues. The residue at position 783 (S783) is a Phosphoserine. Position 786 is a phosphothreonine (T786). Phosphoserine is present on S789. Positions 806-821 (DGDDDEDDDDDDDEVV) are enriched in acidic residues. T829 carries the post-translational modification Phosphothreonine. 2 stretches are compositionally biased toward polar residues: residues 838–850 (FASS…SPTT) and 863–886 (AIKT…NGGT). Phosphoserine is present on S847. Residue T850 is modified to Phosphothreonine.

The protein belongs to the peptidase C19 family. Interacts with atms/PAF1, but not with CycT.

Its subcellular location is the nucleus. It is found in the nucleolus. It catalyses the reaction Thiol-dependent hydrolysis of ester, thioester, amide, peptide and isopeptide bonds formed by the C-terminal Gly of ubiquitin (a 76-residue protein attached to proteins as an intracellular targeting signal).. Its function is as follows. Required for maintaining multiple types of adult stem cells, including male and female germline, epithelial follicle cell and intestinal stem cells. May function as a transcriptional repressor by continually deubiquiting histone H2B at the promoters of genes critical for cellular differentiation, thereby preventing histone H3 'Lys-4' trimethylation (H3K4). Controls selective autophagy activation by ubiquitinated proteins. The chain is Ubiquitin carboxyl-terminal hydrolase 36 (Usp36) from Drosophila ananassae (Fruit fly).